The chain runs to 107 residues: UPF0060 membrane protein RPB_2370 (107 aa).

The next 4 membrane-spanning stretches (helical) occupy residues 5 to 25 (IIYVGAAIAEIAGCFAFWGWL), 31 to 51 (VWWLAPGLLSLALFAYLLTLV), 61 to 81 (AAYGGIYIVASLAWLWSVEGV), and 85 to 105 (RWDVSGACVCLAGAAIILWGP).

Belongs to the UPF0060 family.

The protein localises to the cell inner membrane. The protein is UPF0060 membrane protein RPB_2370 of Rhodopseudomonas palustris (strain HaA2).